Here is a 104-residue protein sequence, read N- to C-terminus: Small ribosomal subunit protein uS10 (104 aa).

The protein belongs to the universal ribosomal protein uS10 family. Part of the 30S ribosomal subunit.

Functionally, involved in the binding of tRNA to the ribosomes. This chain is Small ribosomal subunit protein uS10, found in Nitrosococcus oceani (strain ATCC 19707 / BCRC 17464 / JCM 30415 / NCIMB 11848 / C-107).